A 236-amino-acid polypeptide reads, in one-letter code: MASEELASKLQRRLQWEEGDSGLQPAPGAAPDPEPQPQPPAWAPTARADAELSAQLNRRLDINEGAARPRRCKVFHPYSEFPEFSRRLIKDLESMFKLYDAGRDGFIDLMELKLMMEKLGAPQTHLGLKSMIKEVDEDFDGKLSFREFLLIFHKAAAGELQEDSGLMALAKLSEIDVALEGVKGAKDFFEAKVQALSCASKFEAELKAEQDERKREEEKRKVRQAAFRELKAAFSA.

The disordered stretch occupies residues 1–48 (MASEELASKLQRRLQWEEGDSGLQPAPGAAPDPEPQPQPPAWAPTARA). Positions 28–42 (GAAPDPEPQPQPPAW) are enriched in pro residues. 2 consecutive EF-hand domains span residues 87-122 (RLIK…LGAP) and 123-158 (QTHL…AAAG). 8 residues coordinate Ca(2+): Asp100, Asp104, Glu111, Asp136, Asp138, Asp140, Lys142, and Glu147.

It is found in the mitochondrion inner membrane. Its function is as follows. Acts as a calcium sensor for mitochondrial flash (mitoflash) activation, an event characterized by stochastic bursts of superoxide production. May play a role in neuronal differentiation. This is EF-hand domain-containing protein D1 (EFHD1) from Bos taurus (Bovine).